We begin with the raw amino-acid sequence, 107 residues long: uncharacterized protein (107 aa).

A compositionally biased stretch (polar residues) spans serine 80–alanine 98. The segment at serine 80–glutamate 107 is disordered.

This is an uncharacterized protein from Human spumaretrovirus (SFVcpz(hu)).